The sequence spans 389 residues: S-adenosylmethionine synthase (389 aa).

His15 is an ATP binding site. Residue Asp17 coordinates Mg(2+). Glu43 contributes to the K(+) binding site. Positions 56 and 99 each coordinate L-methionine. Residues 99-109 are flexible loop; that stretch reads QSPDIAQGVNE. ATP-binding positions include 166 to 168, 234 to 235, Asp243, 249 to 250, Ala266, and Lys270; these read DAK, RF, and RK. Asp243 serves as a coordination point for L-methionine. Lys274 contributes to the L-methionine binding site.

It belongs to the AdoMet synthase family. As to quaternary structure, homotetramer; dimer of dimers. Mg(2+) serves as cofactor. It depends on K(+) as a cofactor.

The protein localises to the cytoplasm. It catalyses the reaction L-methionine + ATP + H2O = S-adenosyl-L-methionine + phosphate + diphosphate. It participates in amino-acid biosynthesis; S-adenosyl-L-methionine biosynthesis; S-adenosyl-L-methionine from L-methionine: step 1/1. Catalyzes the formation of S-adenosylmethionine (AdoMet) from methionine and ATP. The overall synthetic reaction is composed of two sequential steps, AdoMet formation and the subsequent tripolyphosphate hydrolysis which occurs prior to release of AdoMet from the enzyme. This Neisseria meningitidis serogroup A / serotype 4A (strain DSM 15465 / Z2491) protein is S-adenosylmethionine synthase.